Consider the following 110-residue polypeptide: uncharacterized protein (110 aa).

Positions 1 to 20 (MNQQNQKISNPQTPVPTTSE) are enriched in polar residues. The tract at residues 1–24 (MNQQNQKISNPQTPVPTTSEMNDR) is disordered.

This is an uncharacterized protein from Bacillus subtilis (strain 168).